Consider the following 120-residue polypeptide: UPF0342 protein Csac_0863 (120 aa).

This sequence belongs to the UPF0342 family.

The sequence is that of UPF0342 protein Csac_0863 from Caldicellulosiruptor saccharolyticus (strain ATCC 43494 / DSM 8903 / Tp8T 6331).